A 937-amino-acid polypeptide reads, in one-letter code: CAP-Gly domain-containing linker protein 1 homolog (937 aa).

A CAP-Gly domain is found at 39 to 81 (GPIHGKDGMFCGIELLEPNGKHDGTFQGVSYFIATPYHGIFAP). Disordered regions lie at residues 90–131 (EELP…VMST) and 264–548 (LPND…SRLQ). Positions 268–281 (LNANFSNKNSTTTF) are enriched in polar residues. Residues 285 to 295 (ETPKVEIRENG) are compositionally biased toward basic and acidic residues. Residues 296-309 (NLDNSIETPPQQSP) are compositionally biased toward polar residues. 4 stretches are compositionally biased toward basic and acidic residues: residues 317-353 (HESDSSSKKDDTKSDKSPTKKSQKMEEKPVVKKKEEP), 383-396 (IEAEKTKPKKEIKS), 409-424 (PQKENKEGGEMTETPR), and 463-473 (AKERVEKEKKI). The span at 492–501 (SSIPSTSSAS) shows a compositional bias: low complexity. Coiled-coil stretches lie at residues 566–740 (EDNE…VDEI) and 773–800 (QQIEDLRRKQIHDEEEKEAMKRSFDLMQ). Disordered stretches follow at residues 819 to 866 (MESR…DSMN) and 916 to 937 (PTIKSESSRIGNTSDSGIGLVM). Positions 832–844 (RSRSSASGSRPIS) are enriched in low complexity. Polar residues predominate over residues 845 to 858 (MATSNGGDQRLSTS).

This Caenorhabditis elegans protein is CAP-Gly domain-containing linker protein 1 homolog.